Reading from the N-terminus, the 168-residue chain is HTH-type transcriptional regulator IscR (168 aa).

One can recognise an HTH rrf2-type domain in the interval 2 to 131 (KLTSKGRYAV…NNITLGELMT (130 aa)). The H-T-H motif DNA-binding region spans 28 to 51 (LADISERQGISLSYLEQLFSKLRK). The [2Fe-2S] cluster site is built by C92, C98, and C104.

Requires [2Fe-2S] cluster as cofactor.

Regulates the transcription of several operons and genes involved in the biogenesis of Fe-S clusters and Fe-S-containing proteins. The chain is HTH-type transcriptional regulator IscR from Vibrio parahaemolyticus serotype O3:K6 (strain RIMD 2210633).